Consider the following 355-residue polypeptide: NAD-dependent protein deacylase sirtuin-6 (355 aa).

Position 2 is an N-acetylserine (S2). The residue at position 10 (S10) is a Phosphoserine; by MAPK8. Residues 27–272 (PEELERKVWE…TRLMKHLGLE (246 aa)) form the Deacetylase sirtuin-type domain. The residue at position 33 (K33) is an N6-acetyllysine. Positions 53, 57, 64, 65, 71, 113, and 133 each coordinate NAD(+). H133 serves as the catalytic Proton acceptor. Zn(2+) is bound by residues C141, C144, and C166. K170 is covalently cross-linked (Glycyl lysine isopeptide (Lys-Gly) (interchain with G-Cter in ubiquitin)). C177 is a binding site for Zn(2+). Positions 214, 216, 240, 242, and 258 each coordinate NAD(+). Positions 284 to 355 (RALPPLPRPP…KRVKAKAVPS (72 aa)) are disordered. Pro residues predominate over residues 287-296 (PPLPRPPTPK). Phosphothreonine is present on T294. Residues S303 and S330 each carry the phosphoserine modification. The segment covering 343–355 (RPPKRVKAKAVPS) has biased composition (basic residues).

The protein belongs to the sirtuin family. Class IV subfamily. In terms of assembly, homodimer; binds to nucleosomes and DNA ends as a homodimer. Interacts with RELA; interferes with RELA binding to target DNA. Interacts with SMARCA5; promoting recruitment of SMARCA5/SNF2H to double-strand breaks (DSBs) sites. Interacts with the mTORC2 complex; preventing the ability of SIRT6 to deacetylate FOXO1. Interacts with the CLOCK-BMAL1 complex; recruited by the CLOCK-BMAL1 complex to regulate expression of clock-controlled genes. Interacts with CSNK2A2; preventing CSNK2A2 localization to the nucleus. As to quaternary structure, (Microbial infection) Interacts with Kaposi's sarcoma-associated herpesvirus protein VIRF-1; this interaction prevents SIRT6 deubiquitination by USP10. The cofactor is Zn(2+). Post-translationally, acetylated at Lys-33. Deacetylation at Lys-33 by SIRT1 promotes homomultimerization and binding to double-strand breaks (DSBs) sites. In terms of processing, phosphorylation at Ser-10 by MAPK8/JNK1 in response to oxidative stress stimulates the mono-ADP-ribosyltransferase activity on PARP1, leading to PARP1 recruitment to double-strand breaks (DSBs). Monoubiquitinated at Lys-170 by STUB1/CHIP, preventing its degradation by the proteasome. Deubiquitinated by USP10, also preventing its degradation by the proteasome. Post-translationally, sumoylated, leading to specifically decrease ability to deacetylate histone H3 at 'Lys-56' (H3K56ac).

It is found in the nucleus. The protein resides in the chromosome. The protein localises to the telomere. Its subcellular location is the endoplasmic reticulum. It carries out the reaction N(6)-acetyl-L-lysyl-[protein] + NAD(+) + H2O = 2''-O-acetyl-ADP-D-ribose + nicotinamide + L-lysyl-[protein]. The enzyme catalyses N(6)-tetradecanoyl-L-lysyl-[protein] + NAD(+) + H2O = 2''-O-tetradecanoyl-ADP-D-ribose + nicotinamide + L-lysyl-[protein]. It catalyses the reaction N(6)-hexadecanoyl-L-lysyl-[protein] + NAD(+) + H2O = 2''-O-hexadecanoyl-ADP-D-ribose + nicotinamide + L-lysyl-[protein]. The catalysed reaction is L-lysyl-[protein] + NAD(+) = N(6)-(ADP-D-ribosyl)-L-lysyl-[protein] + nicotinamide + H(+). It carries out the reaction L-arginyl-[protein] + NAD(+) = N(omega)-(ADP-D-ribosyl)-L-arginyl-[protein] + nicotinamide + H(+). Compared to the defatty-acylase activity, the protein deacetylase activity is weak in vitro, and requires activation. The histone deacetylase activity is strongly activated upon binding to nucleosomes and chromatin in vivo. Two molecules of SIRT6 associate with the acidic patch of one nucleosome, while the C-terminal disordered region of SIRT6 associates with nucleosomal DNA, leading to efficient histone deacetylation. The protein-lysine deacetylase activity is also activated by long-chain free fatty-acids. The histone deacetylase activity is specifically repressed by long non-coding RNA lncPRESS1, which binds to SIRT6 and prevents chromatin-binding, thereby promoting stem cell pluripotency. Due to its essential role as tumor suppressor and involvement in DNA repair and life span, extensive research is made for the identification of small compound regulators of SIRT6. Nitro-fatty acids (nitro-oleic acid and nitro-conjugated linoleic acid) strongly stimulate the protein-lysine deacetylase activity by forming a covalent Michael adduct formation with Cys-18. Activated by UBCS039 (4-(pyridin-3-yl)-4,5- dihydropyrrolo[1,2-a]quinoxaline). Inhibited by non-selective hydroxamate trichostatin A inhibitor. Deacetylase activity is activated by fluvastatin and quercetin-based compounds. The protein-lysine deacetylase activity, but not the defatty-acylase activity, is specifically activated by MDL-800 and MDL-801 activators in vivo, enhancing the histone deacetylase and tumor suppressor activities. MDL-800 and MDL-801 selectively activate SIRT6 and not other members of the sirtuin family. The binding-mode of MDL-801 is however subject to discussion. In terms of biological role, NAD-dependent protein deacetylase, deacylase and mono-ADP-ribosyltransferase that plays an essential role in DNA damage repair, telomere maintenance, metabolic homeostasis, inflammation, tumorigenesis and aging. Displays protein-lysine deacetylase or defatty-acylase (demyristoylase and depalmitoylase) activity, depending on the context. Acts as a key histone deacetylase by catalyzing deacetylation of histone H3 at 'Lys-9', 'Lys-18' and 'Lys-56' (H3K9ac, H3K18ac and H3K56ac, respectively), suppressing target gene expression of several transcription factors, including NF-kappa-B. Acts as an inhibitor of transcription elongation by mediating deacetylation of H3K9ac and H3K56ac, preventing release of NELFE from chromatin and causing transcriptional pausing. Involved in DNA repair by promoting double-strand break (DSB) repair: acts as a DSB sensor by recognizing and binding DSB sites, leading to (1) recruitment of DNA repair proteins, such as SMARCA5/SNF2H, and (2) deacetylation of histone H3K9ac and H3K56ac. SIRT6 participation to DSB repair is probably involved in extension of life span. Also promotes DNA repair by deacetylating non-histone proteins, such as DDB2 and p53/TP53. Specifically deacetylates H3K18ac at pericentric heterochromatin, thereby maintaining pericentric heterochromatin silencing at centromeres and protecting against genomic instability and cellular senescence. Involved in telomere maintenance by catalyzing deacetylation of histone H3 in telomeric chromatin, regulating telomere position effect and telomere movement in response to DNA damage. Required for embryonic stem cell differentiation by mediating histone deacetylation of H3K9ac. Plays a major role in metabolism by regulating processes such as glycolysis, gluconeogenesis, insulin secretion and lipid metabolism. Inhibits glycolysis via histone deacetylase activity and by acting as a corepressor of the transcription factor HIF1A, thereby controlling the expression of multiple glycolytic genes. Has tumor suppressor activity by repressing glycolysis, thereby inhibiting the Warburg effect. Also regulates glycolysis and tumorigenesis by mediating deacetylation and nuclear export of non-histone proteins, such as isoform M2 of PKM (PKM2). Acts as a negative regulator of gluconeogenesis by mediating deacetylation of non-histone proteins, such as FOXO1 and KAT2A/GCN5. Promotes beta-oxidation of fatty acids during fasting by catalyzing deacetylation of NCOA2, inducing coactivation of PPARA. Acts as a regulator of lipid catabolism in brown adipocytes, both by catalyzing deacetylation of histones and non-histone proteins, such as FOXO1. Also acts as a regulator of circadian rhythms, both by regulating expression of clock-controlled genes involved in lipid and carbohydrate metabolism, and by catalyzing deacetylation of PER2. The defatty-acylase activity is specifically involved in regulation of protein secretion. Has high activity toward long-chain fatty acyl groups and mediates protein-lysine demyristoylation and depalmitoylation of target proteins, such as RRAS2 and TNF, thereby regulating their secretion. Also acts as a mono-ADP-ribosyltransferase by mediating mono-ADP-ribosylation of PARP1, TRIM28/KAP1 or SMARCC2/BAF170. Mono-ADP-ribosyltransferase activity is involved in DNA repair, cellular senescence, repression of LINE-1 retrotransposon elements and regulation of transcription. This chain is NAD-dependent protein deacylase sirtuin-6, found in Homo sapiens (Human).